We begin with the raw amino-acid sequence, 1527 residues long: MAKSPRSVVTTGTKRRRAKVHKEDEPVENENLESEFDVSKKESNGATEPGNEPVASKRPKRAAACSNFKEKSLDLSEKDSIITIKESRVEEKEIEAVNLTRTGPEDGQPCRKIIDFILHDGDGNLQPFEMSEVDDIFITALIMPLDDDLEKDRGKGICCSGFGRIENWAISGYDEGAAVIWVSTETSDYKCVKPASSYRSYFEHFSEKARVCVEVYKKLARSVGGNPQVDLEELIAGVVRSINSNRSFNGTVTKDFVISSGEFIYKQLIGLDHTAGNDDEMLATLPVLVALKDECKSRAGFTHLPAMPSNGTLRIKDGQDKGLTEDEDAKLARLLQEEEEWKMMKQRGKRGTSQKNIYIKICETEIANDYPLPAYYKPYNQEMDEYIFDSDIGMYSDDVPVRILDNWALYNSDSRLISLELIPMKAGAENDIVVFGSGFMREDDGSCCSTAELAQLHSSSSKSGREDPGVPIYLSPIKEWVVEFGGSMICITIRTDVAWYKLRQPTKQYAPWCEPVLKTARLAVSIITLLKEQSRASKLSFAEVIKKVAEFDSRHPAFISSKAPTVERYVVVHGQIILQQFADFPDESVKRCAFITGLLAKMEESRHTKLAIKKKSQQMRGENLNPSAKMGPILRKKLMRATTTMLISKIWGEYYATYFPGDTKEEDQNEPKEIDDDQEENEDNDAEEEVNVQDEKATRTPPSTRSRKSSADTRKEIKWEGQTAGKTVSGEVLYKCVIVQDLSISVGATVTTEDDSGETIMCFVEYMYEKLDGKNMIHGIILQEGSQTVLGNAANDREVFLTNDCLEFEASDIKELVTVNIQSLPWGHKYRKENSEAKRIEKAKAEERKRKGLPVEYICKSLYWPEKGGFFSLPYDKIGNGTGICSSCERKPVGNEFKLLSESSFVFENITYNIHDFLYIRPEFFSQGEGHETYKAGRNVGLKPYAVCHLLSVHGPAGSRKANPESTKVKVRRFYRPDDISSTKAYSSDIREVYYSEDIISVPVVMIEGKCEVRLKDDLPNSDLPAVVEHVFCCEYLYDPANGALKQLPPNVRLVTLTRKVPASKKNKGKQICDIELGGSDKPKDGQSENCLATLDIFAGCGGLSEGLQRSGLSLTKWAIEYEEPAGDAFGENHPEAAVFVENCNVILKAIMDKCGDSDDCISTSEAAERAAKLSEDKIKNLPVPGEVEFINGGPPCQGFSGMNRFNQSPWSKVQCEMILAFLSFAEYFRPRFFLLENVRNFVSFNKGQTFRLTLASLLEMGYQVRFGILEAGAYGVAQSRKRAFIWAAAPGETLPEWPEPMHVFASPELKITLPDGKFYAAVKSTAAGAPFRSITVRDTIGDLPAVENGAGKPTIQYGSGPVSWFQKKIRSDMASLNDHISKEMNELNLIRCKHIPKRPGCDWHDLPDEKVKLSTGQMVDLIPWCLPNTAKRHNQWKGLYGRLDWEGNFPTSVTDPQPMGKVGMCFHPEQDRIITVRECARSQGFPDSYRFAGNIQNKHRQIGNAVPPPLAYALGRKLKQAIDAKR.

Disordered regions lie at residues 1–62 (MAKS…PKRA) and 661–718 (GDTK…KEIK). Acidic residues-rich tracts occupy residues 25 to 36 (EPVENENLESEF) and 664 to 692 (KEEDQNEPKEIDDDQEENEDNDAEEEVNV). Positions 709–718 (SSADTRKEIK) are enriched in basic and acidic residues. BAH domains lie at 742–874 (LSIS…FSLP) and 910–1049 (ITYN…KQLP). The SAM-dependent MTase C5-type domain occupies 1092–1526 (LATLDIFAGC…RKLKQAIDAK (435 aa)). The active site involves C1197.

This sequence belongs to the class I-like SAM-binding methyltransferase superfamily. C5-methyltransferase family. As to expression, expressed in roots and inflorescences. Expressed in roots, panicles, anthers, pistils, endosperm and imbibed embryos. Expressed in tissues containing actively replicating and dividing cells, such as shoot and root meristems.

It is found in the nucleus. It catalyses the reaction a 2'-deoxycytidine in DNA + S-adenosyl-L-methionine = a 5-methyl-2'-deoxycytidine in DNA + S-adenosyl-L-homocysteine + H(+). Probably methylates CpG residues and maintains DNA methylation. May be involved in methylation-dependent gene silencing. May play a minor role in the maintenance of DNA methylation. This is DNA (cytosine-5)-methyltransferase 1A from Oryza sativa subsp. japonica (Rice).